A 251-amino-acid chain; its full sequence is Coproheme decarboxylase (251 aa).

Residues Arg-133, 147-151 (YPMSK), His-174, Gln-187, and Ser-225 contribute to the Fe-coproporphyrin III site. The active site involves Tyr-147.

It belongs to the ChdC family. Type 1 subfamily. Homopentamer. Homohexamer in solution. Fe-coproporphyrin III is required as a cofactor.

It carries out the reaction Fe-coproporphyrin III + 2 H2O2 + 2 H(+) = heme b + 2 CO2 + 4 H2O. The catalysed reaction is Fe-coproporphyrin III + H2O2 + H(+) = harderoheme III + CO2 + 2 H2O. The enzyme catalyses harderoheme III + H2O2 + H(+) = heme b + CO2 + 2 H2O. It functions in the pathway porphyrin-containing compound metabolism; protoheme biosynthesis. Functionally, involved in coproporphyrin-dependent heme b biosynthesis. Catalyzes the decarboxylation of Fe-coproporphyrin III (coproheme) to heme b (protoheme IX), the last step of the pathway. The reaction occurs in a stepwise manner with a three-propionate intermediate. The sequence is that of Coproheme decarboxylase from Listeria monocytogenes serovar 1/2a (strain ATCC BAA-679 / EGD-e).